The following is a 356-amino-acid chain: ADP-ribosylhydrolase ARH3 (356 aa).

Residues D26, E33, T62, D63, and D64 each coordinate Mg(2+). Residue D63 coordinates substrate. Substrate-binding positions include 132-138 (KGSYGNG), H168, and I260. Mg(2+) is bound by residues D303, D305, and T306.

It belongs to the ADP-ribosylglycohydrolase family. Monomer. The cofactor is Mg(2+). Requires Mn(2+) as cofactor.

The protein localises to the nucleus. It localises to the cytoplasm. The protein resides in the chromosome. It is found in the mitochondrion matrix. It catalyses the reaction [(1''-&gt;2')-ADP-alpha-D-ribose](n) + H2O = [(1''-&gt;2')-ADP-alpha-D-ribose](n-1) + ADP-D-ribose. The catalysed reaction is 1''-O-acetyl-ADP-alpha-D-ribose + H2O = ADP-D-ribose + acetate + H(+). It carries out the reaction O-(ADP-D-ribosyl)-L-seryl-[protein] + H2O = ADP-D-ribose + L-seryl-[protein]. The enzyme catalyses alpha-NAD(+) + H2O = ADP-D-ribose + nicotinamide + H(+). Its activity is regulated as follows. The protein undergoes a dramatic conformational switch from closed to open states upon substrate-binding, which enables specific substrate recognition for the 1''-O-linkage. The glutamate flap (Glu-33) blocks substrate entrance to Mg(2+) in the unliganded closed state. In presence of substrate, Glu-33 is ejected from the active site: this closed-to-open transition significantly widens the substrate-binding channel and precisely positions the scissile 1''-O-linkage for cleavage while securing tightly 2'- and 3'-hydroxyls of ADP-ribose. Activity is inhibited by calcium. Its function is as follows. ADP-ribosylhydrolase that preferentially hydrolyzes the scissile alpha-O-linkage attached to the anomeric C1'' position of ADP-ribose and acts on different substrates, such as proteins ADP-ribosylated on serine and threonine, free poly(ADP-ribose) and O-acetyl-ADP-D-ribose. Specifically acts as a serine mono-ADP-ribosylhydrolase by mediating the removal of mono-ADP-ribose attached to serine residues on proteins, thereby playing a key role in DNA damage response. Serine ADP-ribosylation of proteins constitutes the primary form of ADP-ribosylation of proteins in response to DNA damage. Does not hydrolyze ADP-ribosyl-arginine, -cysteine, -diphthamide, or -asparagine bonds. Also able to degrade protein free poly(ADP-ribose), which is synthesized in response to DNA damage: free poly(ADP-ribose) acts as a potent cell death signal and its degradation by ADPRHL2 protects cells from poly(ADP-ribose)-dependent cell death, a process named parthanatos. Also hydrolyzes free poly(ADP-ribose) in mitochondria. Specifically digests O-acetyl-ADP-D-ribose, a product of deacetylation reactions catalyzed by sirtuins. Specifically degrades 1''-O-acetyl-ADP-D-ribose isomer, rather than 2''-O-acetyl-ADP-D-ribose or 3''-O-acetyl-ADP-D-ribose isomers. This chain is ADP-ribosylhydrolase ARH3 (adprs), found in Latimeria chalumnae (Coelacanth).